Here is a 325-residue protein sequence, read N- to C-terminus: ATP synthase gamma chain (325 aa).

The protein belongs to the ATPase gamma chain family. In terms of assembly, F-type ATPases have 2 components, CF(1) - the catalytic core - and CF(0) - the membrane proton channel. CF(1) has five subunits: alpha(3), beta(3), gamma(1), delta(1), epsilon(1). CF(0) has three main subunits: a, b and c.

It is found in the cell membrane. In terms of biological role, produces ATP from ADP in the presence of a proton gradient across the membrane. The gamma chain is believed to be important in regulating ATPase activity and the flow of protons through the CF(0) complex. The chain is ATP synthase gamma chain from Corynebacterium diphtheriae (strain ATCC 700971 / NCTC 13129 / Biotype gravis).